We begin with the raw amino-acid sequence, 159 residues long: Ribosomal RNA large subunit methyltransferase H (159 aa).

S-adenosyl-L-methionine is bound by residues Leu76, Gly108, and 127 to 132; that span reads FSRMTF.

It belongs to the RNA methyltransferase RlmH family. In terms of assembly, homodimer.

The protein resides in the cytoplasm. The enzyme catalyses pseudouridine(1915) in 23S rRNA + S-adenosyl-L-methionine = N(3)-methylpseudouridine(1915) in 23S rRNA + S-adenosyl-L-homocysteine + H(+). Functionally, specifically methylates the pseudouridine at position 1915 (m3Psi1915) in 23S rRNA. This Clostridioides difficile (strain 630) (Peptoclostridium difficile) protein is Ribosomal RNA large subunit methyltransferase H.